The sequence spans 61 residues: Bacteriocin sakacin-P (61 aa).

Positions 1–18 (MEKFIELSLKEVTAITGG) are excised as a propeptide. The cysteines at positions 27 and 32 are disulfide-linked.

Belongs to the bacteriocin class IIA/YGNGV family.

It localises to the secreted. Its function is as follows. Bactericidal activity; inhibits closely related Lactobacilli, Listeria monocytogenes and ivanovvi, Enterococcus faecalis, Carnobacterium sp and Brocothrix thermosphacta. The protein is Bacteriocin sakacin-P (sakP) of Latilactobacillus sakei (Lactobacillus sakei).